Reading from the N-terminus, the 427-residue chain is Trigger factor (427 aa).

One can recognise a PPIase FKBP-type domain in the interval 163 to 248 (GDTVVIDFVG…IHEVKAKEVP (86 aa)).

This sequence belongs to the FKBP-type PPIase family. Tig subfamily.

Its subcellular location is the cytoplasm. The catalysed reaction is [protein]-peptidylproline (omega=180) = [protein]-peptidylproline (omega=0). Its function is as follows. Involved in protein export. Acts as a chaperone by maintaining the newly synthesized protein in an open conformation. Functions as a peptidyl-prolyl cis-trans isomerase. This is Trigger factor from Streptococcus pneumoniae (strain ATCC 700669 / Spain 23F-1).